We begin with the raw amino-acid sequence, 135 residues long: Cytochrome c2 (135 aa).

An N-terminal signal peptide occupies residues 1-23; the sequence is MKKGFLAAGVFAAVAFASGAALA. Heme c contacts are provided by Cys-37, Cys-40, His-41, and Met-114.

The protein belongs to the cytochrome c family. Post-translationally, binds 1 heme c group covalently per subunit.

In terms of biological role, cytochrome c2 is found mainly in purple, non-sulfur, photosynthetic bacteria where it functions as the electron donor to the oxidized bacteriochlorophyll in the photophosphorylation pathway. However, it may also have a role in the respiratory chain and is found in some non-photosynthetic bacteria. This Rhodospirillum rubrum (strain ATCC 11170 / ATH 1.1.1 / DSM 467 / LMG 4362 / NCIMB 8255 / S1) protein is Cytochrome c2 (cycA).